The chain runs to 166 residues: Bacterial non-heme ferritin (166 aa).

A Ferritin-like diiron domain is found at 2–145; that stretch reads LSKDLLEALN…THIDYLNRIG (144 aa). 5 residues coordinate Fe cation: glutamate 17, glutamate 50, histidine 53, glutamate 94, and glutamine 127.

This sequence belongs to the ferritin family. Prokaryotic subfamily.

Its subcellular location is the cytoplasm. It carries out the reaction 4 Fe(2+) + O2 + 6 H2O = 4 iron(III) oxide-hydroxide + 12 H(+). Its function is as follows. Iron-storage protein. The chain is Bacterial non-heme ferritin (ftnA) from Staphylococcus haemolyticus (strain JCSC1435).